Consider the following 283-residue polypeptide: MELNKTSESLFSAKIDHNHPRTEAHEPRDQREVRVFSLEGRSSTRQEKADRMPGRTSSRQESSKGSEEGAVHESTAGVSSKEEEESKGDGFFTGGNPTSGMALVETPMAVVSEAMVETSTMTVSQVDLQWVEQLVTSTVESLLVADIDGKQLVEIVLDNSNTVPAAFCGANLTLVQTGEEISVSFSNFVDQAQLTEATQLVQQNPKQLVSLVESLKARQLNLTELVVGNVAVSLPTIEKIETPLHMIAATIRHHDQEGDQEGEGRQDQHQGQHQEKKVEEAHI.

Polar residues predominate over residues 1–10 (MELNKTSESL). 2 disordered regions span residues 1–99 (MELN…NPTS) and 255–283 (DQEGDQEGEGRQDQHQGQHQEKKVEEAHI). 3 stretches are compositionally biased toward basic and acidic residues: residues 14–34 (KIDHNHPRTEAHEPRDQREVR), 42–53 (SSTRQEKADRMP), and 61–71 (ESSKGSEEGAV).

Belongs to the chlamydial CPn_0705/CT_671/TC_0042 family.

This is an uncharacterized protein from Chlamydia trachomatis serovar D (strain ATCC VR-885 / DSM 19411 / UW-3/Cx).